We begin with the raw amino-acid sequence, 196 residues long: Aequorin-1 (196 aa).

Positions 1-7 are excised as a propeptide; that stretch reads MTSEQYS. EF-hand domains lie at 18-53, 54-108, 111-146, and 147-182; these read KWIG…IVIN, NLGA…SKNQ, LIRL…DGII, and QSSE…FWYT. Ca(2+) is bound by residues Asp-31, Asn-33, Asn-35, Arg-37, and Glu-42. 3 may interact with the chromophore regions span residues 47–57, 62–72, and 107–117; these read ASDIVINNLGA, AKRHKDAVEAF, and NQITLIRLWGD. Ca(2+) contacts are provided by Asp-124, Asp-126, Asn-128, Glu-135, Asp-160, Asp-162, Ser-164, Gln-166, and Glu-171.

This sequence belongs to the aequorin family. In terms of processing, the reduction of the disulfide bond is necessary to regenerate aequorin from apoaequorin.

Its function is as follows. Ca(2+)-dependent bioluminescence photoprotein. Displays an emission peak at 470 nm (blue light). Trace amounts of calcium ion trigger the intramolecular oxidation of the chromophore, coelenterazine into coelenteramide and CO(2) with the concomitant emission of light. This Aequorea victoria (Water jellyfish) protein is Aequorin-1.